The chain runs to 186 residues: DNA-directed RNA polymerase 22 kDa subunit (186 aa).

This sequence belongs to the poxviridae DNA-directed RNA polymerase 22 kDa subunit family. In terms of assembly, the DNA-dependent RNA polymerase used for intermediate and late genes expression consists of eight subunits Rpo30/OPG66, Rpo7/OPG90, Rpo22/OPG103, Rpo147/OPG105, Rpo18/OPG119, Rpo19/OPG131, Rpo132/OPG151 and Rpo35/OPG156. The same holoenzyme, with the addition of the transcription-specificity factor OPG109, is used for early gene expression.

The protein resides in the virion. The enzyme catalyses RNA(n) + a ribonucleoside 5'-triphosphate = RNA(n+1) + diphosphate. Its function is as follows. Part of the DNA-dependent RNA polymerase which catalyzes the transcription of viral DNA into RNA using the four ribonucleoside triphosphates as substrates. Responsible for the transcription of early, intermediate and late genes. DNA-dependent RNA polymerase associates with the early transcription factor (ETF), itself composed of OPG118 and OPG133, thereby allowing the early genes transcription. Late transcription, and probably also intermediate transcription, require newly synthesized RNA polymerase. The chain is DNA-directed RNA polymerase 22 kDa subunit (OPG103) from Vertebrata (FPV).